Here is a 442-residue protein sequence, read N- to C-terminus: Cytochrome c biogenesis CcmF C-terminal-like mitochondrial protein (442 aa).

3 helical membrane-spanning segments follow: residues 6 to 26 (NFFFFIIFMVVLCGTAAPVLL), 39 to 59 (PFFNGTIIPILISLFSLLVYL), and 122 to 142 (YLESFCGVLCLLFFCTFFFLA). A disordered region spans residues 151–175 (RARRRKGQTLRPNGNEQRRNDKMRC). The segment covering 166-175 (EQRRNDKMRC) has biased composition (basic and acidic residues). Residues 411–431 (FIFFIWIGFMLASLGGLPSLL) form a helical membrane-spanning segment.

The protein belongs to the CcmF/CycK/Ccl1/NrfE/CcsA family. Interacts with CCMFN2.

It localises to the mitochondrion inner membrane. In terms of biological role, forms a complex with CCMFN1, CCMFN2 and CCMH that performs the assembly of heme with c-type apocytochromes in mitochondria. This Arabidopsis thaliana (Mouse-ear cress) protein is Cytochrome c biogenesis CcmF C-terminal-like mitochondrial protein (CCMFC).